Consider the following 449-residue polypeptide: Glucose-6-phosphate isomerase (449 aa).

The active-site Proton donor is Glu-291. Catalysis depends on residues His-312 and Lys-426.

It belongs to the GPI family.

It is found in the cytoplasm. The enzyme catalyses alpha-D-glucose 6-phosphate = beta-D-fructose 6-phosphate. It participates in carbohydrate biosynthesis; gluconeogenesis. The protein operates within carbohydrate degradation; glycolysis; D-glyceraldehyde 3-phosphate and glycerone phosphate from D-glucose: step 2/4. Its function is as follows. Catalyzes the reversible isomerization of glucose-6-phosphate to fructose-6-phosphate. In Clostridium botulinum (strain Eklund 17B / Type B), this protein is Glucose-6-phosphate isomerase.